Here is a 319-residue protein sequence, read N- to C-terminus: MFATLAAPQPPLPLDLVAAIQDLKRELNAVILAHYYQDPAIQDVADYIGDSLGLSRQAASTNADVIVFAGVHFMAETAKILNPDKLVLLPDLAAGCSLADSCPADAFAAFKAQYPDHWVISYINCSAEIKALSDIICTSSNAVKIVQQLPPDQPLIFAPDRNLGRYVMAQTGRQMVLWEGSCIVHETFSERRILELKATYPNAQVIAHPECEEAVLRHANFIGSTTALLNYSQTEDCDTFIVVTEPGILHQMQRRNPQKTFIPAPPQDQTCNCNECPFMRLNTLEKLYLCMRDRKPQIELPEDLRLAALKPIQRMLEMS.

Positions 34 and 51 each coordinate iminosuccinate. Residue Cys-96 participates in [4Fe-4S] cluster binding. Residues 122-124 (YIN) and Ser-139 each bind iminosuccinate. Cys-182 is a [4Fe-4S] cluster binding site. Iminosuccinate-binding positions include 208–210 (HPE) and Thr-225. Residue Cys-276 coordinates [4Fe-4S] cluster.

The protein belongs to the quinolinate synthase family. Type 2 subfamily. [4Fe-4S] cluster is required as a cofactor.

Its subcellular location is the cytoplasm. The catalysed reaction is iminosuccinate + dihydroxyacetone phosphate = quinolinate + phosphate + 2 H2O + H(+). The protein operates within cofactor biosynthesis; NAD(+) biosynthesis; quinolinate from iminoaspartate: step 1/1. Functionally, catalyzes the condensation of iminoaspartate with dihydroxyacetone phosphate to form quinolinate. The sequence is that of Quinolinate synthase from Thermosynechococcus vestitus (strain NIES-2133 / IAM M-273 / BP-1).